Consider the following 406-residue polypeptide: Cholinephosphotransferase 1 (406 aa).

At A2 the chain carries N-acetylalanine. The Cytoplasmic portion of the chain corresponds to 2–62 (AAGAGARPAP…LLQWIPLWMA (61 aa)). A helical transmembrane segment spans residues 63-83 (PNSITLLGLAINMLTTLVLIS). N64 lines the CDP-choline pocket. At 84–93 (YCPTVTEEAP) the chain is on the lumenal side. The helical transmembrane segment at 94–118 (YWTYLLCALGLFIYQSLDAIDGKQA) threads the bilayer. The Mg(2+) site is built by D111 and D114. R119 is a binding site for CDP-choline. The Cytoplasmic segment spans residues 119 to 125 (RRTNSCS). A helical transmembrane segment spans residues 126–150 (PLGELFDHGCDSLSTVFMAVGASIA). D132 lines the Mg(2+) pocket. The active-site Proton acceptor is H133. Mg(2+) is bound at residue D136. The Lumenal portion of the chain corresponds to 151–160 (VRLGTHPDWL). The chain crosses the membrane as a helical span at residues 161 to 179 (FFCSFIGMFMFYCAHWQTY). Residues 180–190 (VSGVLRFGKVD) are Cytoplasmic-facing. The helical transmembrane segment at 191-207 (VTEIQIALVIVFVLSTF) threads the bilayer. The Lumenal portion of the chain corresponds to 208 to 222 (GGATMWDYTIPILEI). Residues 223–248 (KLKILPVLGVVGGAIFSCSNYFHVIL) traverse the membrane as a helical segment. The Cytoplasmic segment spans residues 249 to 265 (HGGVGKNGSTIAGTSVL). Residues 266–281 (SPGLHIGIIIILAIMI) traverse the membrane as a helical segment. The Lumenal portion of the chain corresponds to 282-293 (YKKSATNLFEKH). Residues 294 to 316 (PCLYTLMFGCVFAKVSQKLVIAH) traverse the membrane as a helical segment. At 317–329 (MTKSELYLQDTVF) the chain is on the cytoplasmic side. Residues 330 to 339 (IGPGLLFLDQ) form a helical membrane-spanning segment. Over 340-346 (YFNNFVD) the chain is Lumenal. The helical transmembrane segment at 347 to 376 (EYIVLWIAMVISSLDMMRYFSALCLQISRH) threads the bilayer. Topologically, residues 377-406 (LHLSIFKTSCHQAPEQVQVLPPKSHQNNMD) are cytoplasmic.

The protein belongs to the CDP-alcohol phosphatidyltransferase class-I family. It depends on Mg(2+) as a cofactor. Requires Mn(2+) as cofactor.

It is found in the golgi apparatus membrane. The enzyme catalyses CDP-choline + a 1,2-diacyl-sn-glycerol = a 1,2-diacyl-sn-glycero-3-phosphocholine + CMP + H(+). It carries out the reaction 1-octadecanoyl-2-(5Z,8Z,11Z,14Z-eicosatetraenoyl)-sn-glycerol + CDP-choline = 1-octadecanoyl-2-(5Z,8Z,11Z,14Z-eicosatetraenoyl)-sn-glycero-3-phosphocholine + CMP + H(+). It catalyses the reaction 1-hexadecanoyl-2-(9Z-octadecenoyl)-sn-glycerol + CDP-choline = 1-hexadecanoyl-2-(9Z-octadecenoyl)-sn-glycero-3-phosphocholine + CMP + H(+). The catalysed reaction is 1-hexadecanoyl-2-(4Z,7Z,10Z,13Z,16Z,19Z-docosahexaenoyl)-sn-glycerol + CDP-choline = 1-hexadecanoyl-2-(4Z,7Z,10Z,13Z,16Z,19Z-docosahexaenoyl)-sn-glycero-3-phosphocholine + CMP + H(+). The enzyme catalyses 1,2-dioctanoyl-sn-glycerol + CDP-choline = 1,2-dioctanoyl-sn-glycero-3-phosphocholine + CMP + H(+). It participates in phospholipid metabolism; phosphatidylcholine biosynthesis; phosphatidylcholine from phosphocholine: step 2/2. Catalyzes the final step of de novo phosphatidylcholine (PC) synthesis, i.e. the transfer of choline phosphate from CDP-choline to the free hydroxyl of a diacylglycerol (DAG), producing a PC. It thereby plays a central role in the formation and maintenance of vesicular membranes. The protein is Cholinephosphotransferase 1 (CHPT1) of Bos taurus (Bovine).